A 238-amino-acid polypeptide reads, in one-letter code: Pyridoxine 5'-phosphate synthase (238 aa).

Residue N9 participates in 3-amino-2-oxopropyl phosphate binding. 1-deoxy-D-xylulose 5-phosphate is bound at residue D11–H12. R20 lines the 3-amino-2-oxopropyl phosphate pocket. H45 acts as the Proton acceptor in catalysis. R47 and H52 together coordinate 1-deoxy-D-xylulose 5-phosphate. E72 serves as the catalytic Proton acceptor. Position 102 (T102) interacts with 1-deoxy-D-xylulose 5-phosphate. Catalysis depends on H189, which acts as the Proton donor. 3-amino-2-oxopropyl phosphate-binding positions include G190 and G211–H212.

Belongs to the PNP synthase family. As to quaternary structure, homooctamer; tetramer of dimers.

The protein localises to the cytoplasm. The catalysed reaction is 3-amino-2-oxopropyl phosphate + 1-deoxy-D-xylulose 5-phosphate = pyridoxine 5'-phosphate + phosphate + 2 H2O + H(+). The protein operates within cofactor biosynthesis; pyridoxine 5'-phosphate biosynthesis; pyridoxine 5'-phosphate from D-erythrose 4-phosphate: step 5/5. Its function is as follows. Catalyzes the complicated ring closure reaction between the two acyclic compounds 1-deoxy-D-xylulose-5-phosphate (DXP) and 3-amino-2-oxopropyl phosphate (1-amino-acetone-3-phosphate or AAP) to form pyridoxine 5'-phosphate (PNP) and inorganic phosphate. The sequence is that of Pyridoxine 5'-phosphate synthase from Ehrlichia ruminantium (strain Gardel).